We begin with the raw amino-acid sequence, 431 residues long: Gamma-glutamyl phosphate reductase (431 aa).

It belongs to the gamma-glutamyl phosphate reductase family.

It is found in the cytoplasm. The catalysed reaction is L-glutamate 5-semialdehyde + phosphate + NADP(+) = L-glutamyl 5-phosphate + NADPH + H(+). It functions in the pathway amino-acid biosynthesis; L-proline biosynthesis; L-glutamate 5-semialdehyde from L-glutamate: step 2/2. Its function is as follows. Catalyzes the NADPH-dependent reduction of L-glutamate 5-phosphate into L-glutamate 5-semialdehyde and phosphate. The product spontaneously undergoes cyclization to form 1-pyrroline-5-carboxylate. The chain is Gamma-glutamyl phosphate reductase from Synechococcus elongatus (strain ATCC 33912 / PCC 7942 / FACHB-805) (Anacystis nidulans R2).